The sequence spans 58 residues: Small ribosomal subunit protein bS21 (58 aa).

It belongs to the bacterial ribosomal protein bS21 family.

In Lactobacillus acidophilus (strain ATCC 700396 / NCK56 / N2 / NCFM), this protein is Small ribosomal subunit protein bS21.